The chain runs to 195 residues: ATP-dependent Clp protease proteolytic subunit (195 aa).

S99 functions as the Nucleophile in the catalytic mechanism. H124 is an active-site residue.

Belongs to the peptidase S14 family. Fourteen ClpP subunits assemble into 2 heptameric rings which stack back to back to give a disk-like structure with a central cavity, resembling the structure of eukaryotic proteasomes.

The protein resides in the cytoplasm. It carries out the reaction Hydrolysis of proteins to small peptides in the presence of ATP and magnesium. alpha-casein is the usual test substrate. In the absence of ATP, only oligopeptides shorter than five residues are hydrolyzed (such as succinyl-Leu-Tyr-|-NHMec, and Leu-Tyr-Leu-|-Tyr-Trp, in which cleavage of the -Tyr-|-Leu- and -Tyr-|-Trp bonds also occurs).. Its function is as follows. Cleaves peptides in various proteins in a process that requires ATP hydrolysis. Has a chymotrypsin-like activity. Plays a major role in the degradation of misfolded proteins. This Coxiella burnetii (strain RSA 331 / Henzerling II) protein is ATP-dependent Clp protease proteolytic subunit.